Here is a 1311-residue protein sequence, read N- to C-terminus: AF4/FMR2 family member 2 (1311 aa).

Disordered stretches follow at residues Leu-94–Asp-187, Pro-204–Ala-229, and Thr-377–Val-417. Positions Ser-101–Glu-111 are enriched in polar residues. The span at Ser-155 to His-164 shows a compositional bias: basic and acidic residues. Residues Asn-165–Asp-187 show a composition bias toward polar residues. Polar residues-rich tracts occupy residues Thr-377–Leu-396 and Gln-403–Val-417. Ser-430 is subject to Phosphoserine. Disordered regions lie at residues Lys-457–Leu-530, Thr-574–Glu-726, Ser-818–Lys-867, and Pro-881–Ile-943. A compositionally biased stretch (pro residues) spans Val-465–Ala-477. Residues Val-478–Glu-491 are compositionally biased toward low complexity. A Phosphothreonine modification is found at Thr-517. Residues Glu-582–Arg-597 show a composition bias toward basic and acidic residues. The segment covering Ser-615–Thr-625 has biased composition (polar residues). Positions Pro-655–Arg-668 are enriched in basic and acidic residues. Positions Gly-669 to Ala-679 are enriched in basic residues. The span at Pro-857 to Lys-867 shows a compositional bias: basic and acidic residues. Composition is skewed to pro residues over residues Cys-883–Pro-892 and Phe-913–Glu-922.

This sequence belongs to the AF4 family. Brain (most abundant in hippocampus and amygdala), placenta and lung.

It localises to the nucleus speckle. Functionally, RNA-binding protein. Might be involved in alternative splicing regulation through an interaction with G-quartet RNA structure. This chain is AF4/FMR2 family member 2, found in Homo sapiens (Human).